We begin with the raw amino-acid sequence, 151 residues long: Protein SprT-like (151 aa).

The 141-residue stretch at 7-147 (QKLTESISES…GKCKGKLHLH (141 aa)) folds into the SprT-like domain. Histidine 67 is a Zn(2+) binding site. Residue glutamate 68 is part of the active site. Histidine 71 contributes to the Zn(2+) binding site.

The protein belongs to the SprT family. Zn(2+) serves as cofactor.

It localises to the cytoplasm. This is Protein SprT-like from Staphylococcus carnosus (strain TM300).